A 423-amino-acid polypeptide reads, in one-letter code: Tubulin beta-2 chain (423 aa).

Residues Glu44, Ser113, Gly117, Thr118, Gly119, Asn179, and Asn201 each contribute to the GTP site. Glu44 is a binding site for Mg(2+). The segment at 394–423 (VSEYQQYQDATAEEEGEYDEDEDDEGGDYA) is disordered. Acidic residues predominate over residues 404-423 (TAEEEGEYDEDEDDEGGDYA).

The protein belongs to the tubulin family. In terms of assembly, dimer of alpha and beta chains. A typical microtubule is a hollow water-filled tube with an outer diameter of 25 nm and an inner diameter of 15 nM. Alpha-beta heterodimers associate head-to-tail to form protofilaments running lengthwise along the microtubule wall with the beta-tubulin subunit facing the microtubule plus end conferring a structural polarity. Microtubules usually have 13 protofilaments but different protofilament numbers can be found in some organisms and specialized cells. Mg(2+) serves as cofactor.

The protein resides in the cytoplasm. It localises to the cytoskeleton. Tubulin is the major constituent of microtubules, a cylinder consisting of laterally associated linear protofilaments composed of alpha- and beta-tubulin heterodimers. Microtubules grow by the addition of GTP-tubulin dimers to the microtubule end, where a stabilizing cap forms. Below the cap, tubulin dimers are in GDP-bound state, owing to GTPase activity of alpha-tubulin. The polypeptide is Tubulin beta-2 chain (TUBB2) (Oomycete-like sp. (strain MacKay2000)).